A 180-amino-acid chain; its full sequence is MFPMVTGFMNYGQQTVRAARYIGQSFMITLSHANRLPVTIQYPYEKSITSERFRGRIHFELDKCIACEVCVRVCPIDLPVVDWRLETDIRKKRLLNYSIDFGICIFCGNCVEYCPTNCLSMTEEYELSTYDRHELNYNQIALGRLPMSVIEDYTIQTILNSTQIQIVTDKPLNSRTITNS.

4Fe-4S ferredoxin-type domains follow at residues 55-84 (GRIH…VDWR) and 95-124 (LNYS…MTEE). Cys64, Cys67, Cys70, Cys74, Cys104, Cys107, Cys110, and Cys114 together coordinate [4Fe-4S] cluster.

This sequence belongs to the complex I 23 kDa subunit family. As to quaternary structure, NDH is composed of at least 16 different subunits, 5 of which are encoded in the nucleus. [4Fe-4S] cluster is required as a cofactor.

The protein resides in the plastid. Its subcellular location is the chloroplast thylakoid membrane. The enzyme catalyses a plastoquinone + NADH + (n+1) H(+)(in) = a plastoquinol + NAD(+) + n H(+)(out). The catalysed reaction is a plastoquinone + NADPH + (n+1) H(+)(in) = a plastoquinol + NADP(+) + n H(+)(out). In terms of biological role, NDH shuttles electrons from NAD(P)H:plastoquinone, via FMN and iron-sulfur (Fe-S) centers, to quinones in the photosynthetic chain and possibly in a chloroplast respiratory chain. The immediate electron acceptor for the enzyme in this species is believed to be plastoquinone. Couples the redox reaction to proton translocation, and thus conserves the redox energy in a proton gradient. In Chloranthus spicatus (Chulantree), this protein is NAD(P)H-quinone oxidoreductase subunit I, chloroplastic.